A 254-amino-acid polypeptide reads, in one-letter code: 5-oxoprolinase subunit A (254 aa).

Belongs to the LamB/PxpA family. As to quaternary structure, forms a complex composed of PxpA, PxpB and PxpC.

The catalysed reaction is 5-oxo-L-proline + ATP + 2 H2O = L-glutamate + ADP + phosphate + H(+). Catalyzes the cleavage of 5-oxoproline to form L-glutamate coupled to the hydrolysis of ATP to ADP and inorganic phosphate. In Heliobacterium modesticaldum (strain ATCC 51547 / Ice1), this protein is 5-oxoprolinase subunit A.